A 163-amino-acid chain; its full sequence is Succinate dehydrogenase assembly factor 2-A, mitochondrial (163 aa).

A mitochondrion-targeting transit peptide spans 1–23 (MLRQLRLTMDISGWIFLPWRRSM).

Belongs to the SDHAF2 family. As to quaternary structure, interacts with the flavoprotein subunit within the SDH catalytic dimer.

Its subcellular location is the mitochondrion matrix. Functionally, plays an essential role in the assembly of succinate dehydrogenase (SDH), an enzyme complex (also referred to as respiratory complex II) that is a component of both the tricarboxylic acid (TCA) cycle and the mitochondrial electron transport chain, and which couples the oxidation of succinate to fumarate with the reduction of ubiquinone (coenzyme Q) to ubiquinol. Required for flavinylation (covalent attachment of FAD) of the flavoprotein subunit of the SDH catalytic dimer. The chain is Succinate dehydrogenase assembly factor 2-A, mitochondrial from Drosophila sechellia (Fruit fly).